Here is a 523-residue protein sequence, read N- to C-terminus: GMP synthase [glutamine-hydrolyzing] (523 aa).

One can recognise a Glutamine amidotransferase type-1 domain in the interval 9–198; it reads PVLVVDYGAQ…LTEIAGLEQN (190 aa). The active-site Nucleophile is the Cys-86. Residues His-172 and Glu-174 contribute to the active site. The GMPS ATP-PPase domain maps to 199 to 397; it reads WTAANIAEEL…LGLPEVIVAR (199 aa). Position 227–233 (227–233) interacts with ATP; it reads SGGVDSA.

In terms of assembly, homodimer.

It catalyses the reaction XMP + L-glutamine + ATP + H2O = GMP + L-glutamate + AMP + diphosphate + 2 H(+). It participates in purine metabolism; GMP biosynthesis; GMP from XMP (L-Gln route): step 1/1. In terms of biological role, catalyzes the synthesis of GMP from XMP. The sequence is that of GMP synthase [glutamine-hydrolyzing] from Corynebacterium efficiens (strain DSM 44549 / YS-314 / AJ 12310 / JCM 11189 / NBRC 100395).